The following is a 476-amino-acid chain: Bifunctional protein GlmU (476 aa).

Residues 1–235 (MTALDIIIMA…ALQVAGVNSP (235 aa)) form a pyrophosphorylase region. Residues Lys23, Gln81, 86–87 (GT), 108–110 (SGD), Gly145, Glu160, and Asn233 each bind UDP-N-acetyl-alpha-D-glucosamine. Asp110 is a binding site for Mg(2+). Asn233 is a binding site for Mg(2+). The linker stretch occupies residues 236 to 256 (AQLAELERAHQRAQAAALMEQ). The tract at residues 257–476 (GVRLADPARF…WKRPAKQAKG (220 aa)) is N-acetyltransferase. UDP-N-acetyl-alpha-D-glucosamine is bound by residues Arg351 and Lys369. The active-site Proton acceptor is His381. Tyr384 and Asn395 together coordinate UDP-N-acetyl-alpha-D-glucosamine. Acetyl-CoA contacts are provided by residues Ala398, 404 to 405 (NY), Ser423, Gly441, and Arg458.

The protein in the N-terminal section; belongs to the N-acetylglucosamine-1-phosphate uridyltransferase family. This sequence in the C-terminal section; belongs to the transferase hexapeptide repeat family. Homotrimer. Mg(2+) is required as a cofactor.

It is found in the cytoplasm. The catalysed reaction is alpha-D-glucosamine 1-phosphate + acetyl-CoA = N-acetyl-alpha-D-glucosamine 1-phosphate + CoA + H(+). It carries out the reaction N-acetyl-alpha-D-glucosamine 1-phosphate + UTP + H(+) = UDP-N-acetyl-alpha-D-glucosamine + diphosphate. The protein operates within nucleotide-sugar biosynthesis; UDP-N-acetyl-alpha-D-glucosamine biosynthesis; N-acetyl-alpha-D-glucosamine 1-phosphate from alpha-D-glucosamine 6-phosphate (route II): step 2/2. It functions in the pathway nucleotide-sugar biosynthesis; UDP-N-acetyl-alpha-D-glucosamine biosynthesis; UDP-N-acetyl-alpha-D-glucosamine from N-acetyl-alpha-D-glucosamine 1-phosphate: step 1/1. It participates in bacterial outer membrane biogenesis; LPS lipid A biosynthesis. In terms of biological role, catalyzes the last two sequential reactions in the de novo biosynthetic pathway for UDP-N-acetylglucosamine (UDP-GlcNAc). The C-terminal domain catalyzes the transfer of acetyl group from acetyl coenzyme A to glucosamine-1-phosphate (GlcN-1-P) to produce N-acetylglucosamine-1-phosphate (GlcNAc-1-P), which is converted into UDP-GlcNAc by the transfer of uridine 5-monophosphate (from uridine 5-triphosphate), a reaction catalyzed by the N-terminal domain. This Acidovorax ebreus (strain TPSY) (Diaphorobacter sp. (strain TPSY)) protein is Bifunctional protein GlmU.